The primary structure comprises 267 residues: Transcription factor LBX1 (267 aa).

Basic and acidic residues predominate over residues 1–21; sequence MTSKDEAKSSASSVEERRRNA. A disordered region spans residues 1 to 36; it reads MTSKDEAKSSASSVEERRRNALDLLPPPANSNKPLT. The segment at residues 127 to 186 is a DNA-binding region (homeobox); sequence RRKSRTAFTNHQIYELEKRFLYQKYLSPADRDQIAQQLGLTNAQVITWFQNRRAKLKRDL. The segment at 211–267 is disordered; that stretch reads SELEESGSERGNSRSRSPQLGLTSNHMPLSPSXPLTDQHASKECSEDEEDVEIDVDD. A compositionally biased stretch (polar residues) spans 228-237; that stretch reads PQLGLTSNHM. Residues 255–267 are compositionally biased toward acidic residues; it reads SEDEEDVEIDVDD.

In terms of tissue distribution, expressed in all myoblasts that will populate body wall muscles as well as in a group of cells the migrate into the head.

It is found in the nucleus. Its function is as follows. Transcription factor that controls hypaxial muscle development by down-regulating myod1 and cdkn1b/p27, thereby allowing myoblasts to proliferate before the onset of terminal differentiation. The chain is Transcription factor LBX1 from Xenopus laevis (African clawed frog).